The sequence spans 217 residues: Ependymin (217 aa).

The N-terminal stretch at 1 to 20 (MHTVKLLCVVFSCLCAIGWA) is a signal peptide. Asn73 and Asn96 each carry an N-linked (GlcNAc...) asparagine glycan.

This sequence belongs to the ependymin family. As to quaternary structure, forms disulfide-linked dimers. Post-translationally, binds calcium through the terminal sialic acids. As to expression, EPDs are synthesized in the meninx and secreted in the cerebrospinal fluid.

The protein resides in the secreted. In terms of biological role, may play a role in neural plasticity. May be involved during axon regeneration. The protein is Ependymin (epd) of Danio rerio (Zebrafish).